The following is a 60-amino-acid chain: Large ribosomal subunit protein bL32 (60 aa).

The protein belongs to the bacterial ribosomal protein bL32 family.

In Streptococcus sanguinis (strain SK36), this protein is Large ribosomal subunit protein bL32.